The sequence spans 227 residues: Chaperone protein FocC (227 aa).

The first 21 residues, 1–21 (MRIWAVLASFLVFFYIPQSYA), serve as a signal peptide directing secretion.

This sequence belongs to the periplasmic pilus chaperone family.

Its subcellular location is the periplasm. Its function is as follows. Involved in the biogenesis of the F1C fimbriae. The sequence is that of Chaperone protein FocC (focC) from Escherichia coli O6:H1 (strain CFT073 / ATCC 700928 / UPEC).